The sequence spans 594 residues: Glomulin (594 aa).

N-acetylalanine is present on Ala2. An alpha-helical region with structural similarity to HEAT repeats region spans residues 2–553; that stretch reads AVEELQSIIK…EEIPNMPPEM (552 aa). An important for interaction with RBX1 region spans residues 300-594; that stretch reads IDQLPMVLSP…STSEENIGIK (295 aa).

In terms of assembly, interacts with FKBP4 and FKBP1A. Isoform 1: Interacts with RBX1 (via RING domain). Identified in complexes that contain RBX1 plus one of the cullins CUL1, CUL2, CUL3, and CUL4A. Identified in a SCF complex composed of CUL1, RBX1, SKP1, FBXW7 and GLMN. Component of a SCF-like complex consisting of CUL7, RBX1, SKP1, FBXW8 and GLMN. Interacts with unphosphorylated MET and is released upon MET phosphorylation. Post-translationally, phosphorylated on tyrosine residues. In terms of tissue distribution, ubiquitous.

In terms of biological role, regulatory component of cullin-RING-based SCF (SKP1-Cullin-F-box protein) E3 ubiquitin-protein ligase complexes. Inhibits E3 ubiquitin ligase activity by binding to RBX1 (via RING domain) and inhibiting its interaction with the E2 ubiquitin-conjugating enzyme CDC34. Inhibits RBX1-mediated neddylation of CUL1. Required for normal stability and normal cellular levels of key components of SCF ubiquitin ligase complexes, including FBXW7, RBX1, CUL1, CUL2, CUL3, CUL4A, and thereby contributes to the regulation of CCNE1 and MYC levels. Essential for normal development of the vasculature. Contributes to the regulation of RPS6KB1 phosphorylation. The protein is Glomulin (GLMN) of Homo sapiens (Human).